The following is a 325-amino-acid chain: Ubiquitin thioesterase OTU1 (325 aa).

The interval R7 to G86 is UBX-like. In terms of domain architecture, OTU spans A123–C246. Positions T128–C134 are cys-loop. The active site involves D131. Catalysis depends on C134, which acts as the Nucleophile. The segment at I185–I195 is variable-loop. The interval Y235–H239 is his-loop. I238 contacts substrate. H239 is an active-site residue. The segment at K265–K270 is S2 site. The C2H2-type zinc-finger motif lies at L292 to H316. H316 is an active-site residue.

It localises to the cytoplasm. It catalyses the reaction Thiol-dependent hydrolysis of ester, thioester, amide, peptide and isopeptide bonds formed by the C-terminal Gly of ubiquitin (a 76-residue protein attached to proteins as an intracellular targeting signal).. In terms of biological role, hydrolase that can remove conjugated ubiquitin from proteins and may therefore play an important regulatory role at the level of protein turnover by preventing degradation. The polypeptide is Ubiquitin thioesterase OTU1 (yod1) (Dictyostelium discoideum (Social amoeba)).